The sequence spans 148 residues: Arginine repressor (148 aa).

This sequence belongs to the ArgR family.

It localises to the cytoplasm. Its pathway is amino-acid biosynthesis; L-arginine biosynthesis [regulation]. Functionally, regulates arginine biosynthesis genes. This Chlorobium phaeovibrioides (strain DSM 265 / 1930) (Prosthecochloris vibrioformis (strain DSM 265)) protein is Arginine repressor.